The primary structure comprises 571 residues: Putative clathrin assembly protein At2g01600 (571 aa).

The ENTH domain maps to 24–161; the sequence is RVNSEYADLD…ECFRVLKYDT (138 aa). Disordered stretches follow at residues 325–346 and 474–571; these read YRPD…REML and PAPN…TGLI. The segment covering 337–346 has biased composition (basic and acidic residues); the sequence is EPSHEEREML. The span at 508-522 shows a compositional bias: low complexity; it reads QQTYQHQPQPTYQHQ. Composition is skewed to polar residues over residues 523-532 and 543-571; these read SNPPTNNSNP and PVSQ…TGLI.

The protein resides in the membrane. It localises to the clathrin-coated pit. Its subcellular location is the golgi apparatus. The protein localises to the cytoplasmic vesicle. It is found in the clathrin-coated vesicle. This Arabidopsis thaliana (Mouse-ear cress) protein is Putative clathrin assembly protein At2g01600.